The primary structure comprises 242 residues: 7-cyano-7-deazaguanine synthase (242 aa).

An ATP-binding site is contributed by 13–23 (FSGGQDSSVCL). Zn(2+) contacts are provided by Cys201, Cys216, Cys219, and Cys222.

This sequence belongs to the QueC family. Requires Zn(2+) as cofactor.

The catalysed reaction is 7-carboxy-7-deazaguanine + NH4(+) + ATP = 7-cyano-7-deazaguanine + ADP + phosphate + H2O + H(+). It functions in the pathway purine metabolism; 7-cyano-7-deazaguanine biosynthesis. In terms of biological role, catalyzes the ATP-dependent conversion of 7-carboxy-7-deazaguanine (CDG) to 7-cyano-7-deazaguanine (preQ(0)). The chain is 7-cyano-7-deazaguanine synthase from Caulobacter vibrioides (strain ATCC 19089 / CIP 103742 / CB 15) (Caulobacter crescentus).